A 373-amino-acid polypeptide reads, in one-letter code: tRNA-specific 2-thiouridylase MnmA (373 aa).

ATP-binding positions include 12-19 (GMSGGVDS) and Met-38. The tract at residues 98–100 (NPD) is interaction with target base in tRNA. The active-site Nucleophile is the Cys-103. A disulfide bridge links Cys-103 with Cys-200. Gly-127 is a binding site for ATP. Positions 150–152 (KDQ) are interaction with tRNA. The Cysteine persulfide intermediate role is filled by Cys-200. Residues 312–313 (RY) are interaction with tRNA.

It belongs to the MnmA/TRMU family.

The protein resides in the cytoplasm. The catalysed reaction is S-sulfanyl-L-cysteinyl-[protein] + uridine(34) in tRNA + AH2 + ATP = 2-thiouridine(34) in tRNA + L-cysteinyl-[protein] + A + AMP + diphosphate + H(+). In terms of biological role, catalyzes the 2-thiolation of uridine at the wobble position (U34) of tRNA, leading to the formation of s(2)U34. The protein is tRNA-specific 2-thiouridylase MnmA of Streptococcus pneumoniae serotype 19F (strain G54).